Reading from the N-terminus, the 238-residue chain is Ankyrin repeat domain-containing protein 49 (238 aa).

At serine 48 the chain carries Phosphoserine. 4 ANK repeats span residues 77-105 (LLWA…TRDE), 106-135 (DKYT…DVHA), 139-168 (DGWT…DVNA), and 172-205 (GLLT…GLKN).

Its subcellular location is the nucleus. May have a role in spermatogenesis where it promotes autophagy in response to serum starvation, via the NF-kappaB pathway. The chain is Ankyrin repeat domain-containing protein 49 (ANKRD49) from Bos taurus (Bovine).